Here is a 492-residue protein sequence, read N- to C-terminus: Cytochrome P450 2A2 (492 aa).

Position 437 (C437) interacts with heme.

It belongs to the cytochrome P450 family. It depends on heme as a cofactor. In terms of tissue distribution, liver specific.

It is found in the endoplasmic reticulum membrane. The protein resides in the microsome membrane. It catalyses the reaction an organic molecule + reduced [NADPH--hemoprotein reductase] + O2 = an alcohol + oxidized [NADPH--hemoprotein reductase] + H2O + H(+). In terms of biological role, highly active in the 15-alpha-hydroxylation of testosterone. The polypeptide is Cytochrome P450 2A2 (Cyp2a2) (Rattus norvegicus (Rat)).